The chain runs to 598 residues: Elongation factor 4 (598 aa).

Residues 2–184 (DHIRNFSIIA…AIVKRVPPPR (183 aa)) form the tr-type G domain. GTP is bound by residues 14 to 19 (DHGKST) and 131 to 134 (NKID).

It belongs to the TRAFAC class translation factor GTPase superfamily. Classic translation factor GTPase family. LepA subfamily.

It is found in the cell inner membrane. The catalysed reaction is GTP + H2O = GDP + phosphate + H(+). Its function is as follows. Required for accurate and efficient protein synthesis under certain stress conditions. May act as a fidelity factor of the translation reaction, by catalyzing a one-codon backward translocation of tRNAs on improperly translocated ribosomes. Back-translocation proceeds from a post-translocation (POST) complex to a pre-translocation (PRE) complex, thus giving elongation factor G a second chance to translocate the tRNAs correctly. Binds to ribosomes in a GTP-dependent manner. This chain is Elongation factor 4, found in Syntrophus aciditrophicus (strain SB).